The primary structure comprises 37 residues: Protein 6.3 (37 aa).

This is Protein 6.3 from Escherichia phage T7 (Bacteriophage T7).